The sequence spans 298 residues: Protease HtpX homolog (298 aa).

The next 2 helical transmembrane spans lie at 15 to 35 (LIMVLFVVILTLVGAGLGYLF) and 39 to 59 (PWMGIIIALAGSLIYLLIMWQ). His143 is a binding site for Zn(2+). The active site involves Glu144. His147 is a Zn(2+) binding site. 2 consecutive transmembrane segments (helical) span residues 153–173 (ILLSTIAVVLVGVISFISGMA) and 197–217 (MIFKVVAIVFVLILGPLSASL). Glu227 is a binding site for Zn(2+).

This sequence belongs to the peptidase M48B family. The cofactor is Zn(2+).

It localises to the cell membrane. This chain is Protease HtpX homolog, found in Lactobacillus helveticus (strain DPC 4571).